Reading from the N-terminus, the 327-residue chain is DNA-directed RNA polymerase subunit alpha (327 aa).

The segment at 1-243 (MEKFLKYEIK…EHLNPIVNVN (243 aa)) is alpha N-terminal domain (alpha-NTD). The interval 260 to 327 (RVRSFAKQIE…VHELGLKLRS (68 aa)) is alpha C-terminal domain (alpha-CTD).

Belongs to the RNA polymerase alpha chain family. As to quaternary structure, homodimer. The RNAP catalytic core consists of 2 alpha, 1 beta, 1 beta' and 1 omega subunit. When a sigma factor is associated with the core the holoenzyme is formed, which can initiate transcription.

It catalyses the reaction RNA(n) + a ribonucleoside 5'-triphosphate = RNA(n+1) + diphosphate. In terms of biological role, DNA-dependent RNA polymerase catalyzes the transcription of DNA into RNA using the four ribonucleoside triphosphates as substrates. The protein is DNA-directed RNA polymerase subunit alpha of Mycoplasma pneumoniae (strain ATCC 29342 / M129 / Subtype 1) (Mycoplasmoides pneumoniae).